A 228-amino-acid chain; its full sequence is Ephrin-A5 (228 aa).

The N-terminal stretch at 1-20 (MLHVEMLTLVFLVLWMCVFS) is a signal peptide. Residues 29-162 (ADRYAVYWNS…KLKVFVRPTN (134 aa)) form the Ephrin RBD domain. Residue asparagine 37 is glycosylated (N-linked (GlcNAc...) asparagine). 2 disulfides stabilise this stretch: cysteine 62/cysteine 102 and cysteine 90/cysteine 151. A disordered region spans residues 186–205 (EPADDTVHESAEPSRGENAA). Residues 190–200 (DTVHESAEPSR) are compositionally biased toward basic and acidic residues. Asparagine 203 carries GPI-anchor amidated asparagine lipidation. A propeptide spans 204 to 228 (AAQTPRIPSRLLAILLFLLAMLLTL) (removed in mature form).

Belongs to the ephrin family. As to quaternary structure, binds to EPHB2. Interacts with EPHA8; activates EPHA8. Binds to the receptor tyrosine kinases EPHA2, EPHA3 and EPHB1. Forms a ternary EFNA5-EPHA3-ADAM10 complex mediating EFNA5 extracellular domain shedding by ADAM10 which regulates the EFNA5-EPHA3 complex internalization and function.

Its subcellular location is the cell membrane. The protein resides in the membrane. It localises to the caveola. Functionally, cell surface GPI-bound ligand for Eph receptors, a family of receptor tyrosine kinases which are crucial for migration, repulsion and adhesion during neuronal, vascular and epithelial development. Binds promiscuously Eph receptors residing on adjacent cells, leading to contact-dependent bidirectional signaling into neighboring cells. The signaling pathway downstream of the receptor is referred to as forward signaling while the signaling pathway downstream of the ephrin ligand is referred to as reverse signaling. Induces compartmentalized signaling within a caveolae-like membrane microdomain when bound to the extracellular domain of its cognate receptor. This signaling event requires the activity of the Fyn tyrosine kinase. Activates the EPHA3 receptor to regulate cell-cell adhesion and cytoskeletal organization. With the receptor EPHA2 may regulate lens fiber cells shape and interactions and be important for lens transparency maintenance. May function actively to stimulate axon fasciculation. The interaction of EFNA5 with EPHA5 also mediates communication between pancreatic islet cells to regulate glucose-stimulated insulin secretion. Cognate/functional ligand for EPHA7, their interaction regulates brain development modulating cell-cell adhesion and repulsion. In Homo sapiens (Human), this protein is Ephrin-A5 (EFNA5).